The primary structure comprises 343 residues: D-beta-hydroxybutyrate dehydrogenase, mitochondrial (343 aa).

A mitochondrion-targeting transit peptide spans 1-46; sequence MLAARLSRPLSQLPGKALSVRDRENGTRHTLLFYPASFSPDTRRTY. 60–84 serves as a coordination point for NAD(+); the sequence is ITGCDSGFGFSLAKHLHSKGFLVFA. N6-acetyllysine is present on residues K73 and K97. Position 103 is an N6-acetyllysine; alternate (K103). K103 carries the post-translational modification N6-succinyllysine; alternate. N6-acetyllysine occurs at positions 132 and 177. Residue M196 participates in substrate binding. Catalysis depends on C209, which acts as the Proton acceptor. K212 is modified (N6-acetyllysine). O-linked (GlcNAc) serine glycosylation occurs at S219. S246 carries the post-translational modification Phosphoserine. The residue at position 258 (K258) is an N6-acetyllysine. At K259 the chain carries N6-acetyllysine; alternate. K259 carries the N6-succinyllysine; alternate modification. K280 carries the post-translational modification N6-acetyllysine.

The protein belongs to the short-chain dehydrogenases/reductases (SDR) family. As to quaternary structure, homotetramer. Acetylation of Lys-132 is observed in liver mitochondria from fasted mice but not from fed mice.

The protein localises to the mitochondrion inner membrane. The protein resides in the mitochondrion matrix. It carries out the reaction (R)-3-hydroxybutanoate + NAD(+) = acetoacetate + NADH + H(+). Requires phosphatidylcholine as an allosteric activator for enzymatic activity. This chain is D-beta-hydroxybutyrate dehydrogenase, mitochondrial, found in Mus musculus (Mouse).